The following is a 64-amino-acid chain: Large ribosomal subunit protein bL33c (64 aa).

Belongs to the bacterial ribosomal protein bL33 family.

It localises to the plastid. Its subcellular location is the chloroplast. This Thalassiosira pseudonana (Marine diatom) protein is Large ribosomal subunit protein bL33c.